A 713-amino-acid polypeptide reads, in one-letter code: KNR4/SMI1 homolog (713 aa).

4 disordered regions span residues 18-129 (PDRY…VTRD), 255-274 (IFIN…SPVA), 400-457 (RHQM…SKPA), and 500-713 (EPLE…KGKK). Low complexity predominate over residues 22–34 (ASQQRSSKASQSA). Polar residues predominate over residues 35–65 (GANSQNRPLYNNDDNQSEMYQASSSYTGGYT). Composition is skewed to low complexity over residues 66–81 (NSPS…GAAA) and 88–103 (SSRN…SSTS). Over residues 260 to 270 (NAGSPNSSTPG) the composition is skewed to polar residues. Over residues 400-412 (RHQMQRREHERRQ) the composition is skewed to basic and acidic residues. The segment covering 413–429 (AAAAAQQQQQQQQHHAQ) has biased composition (low complexity). Basic and acidic residues-rich tracts occupy residues 507-605 (EIKG…EEQK) and 613-662 (AKAE…KIDE). Over residues 663–686 (ENGNAEEADEEADDDDEDDEEEGD) the composition is skewed to acidic residues. The span at 701–713 (SKSKKKNKKKGKK) shows a compositional bias: basic residues.

This sequence belongs to the KNR4/SMI1 family.

The protein is KNR4/SMI1 homolog of Yarrowia lipolytica (strain CLIB 122 / E 150) (Yeast).